A 736-amino-acid polypeptide reads, in one-letter code: 1,4-alpha-glucan branching enzyme GlgB (736 aa).

Residue aspartate 415 is the Nucleophile of the active site. Residue glutamate 470 is the Proton donor of the active site.

It belongs to the glycosyl hydrolase 13 family. GlgB subfamily. Monomer.

It catalyses the reaction Transfers a segment of a (1-&gt;4)-alpha-D-glucan chain to a primary hydroxy group in a similar glucan chain.. Its pathway is glycan biosynthesis; glycogen biosynthesis. In terms of biological role, catalyzes the formation of the alpha-1,6-glucosidic linkages in glycogen by scission of a 1,4-alpha-linked oligosaccharide from growing alpha-1,4-glucan chains and the subsequent attachment of the oligosaccharide to the alpha-1,6 position. The polypeptide is 1,4-alpha-glucan branching enzyme GlgB (Paraburkholderia xenovorans (strain LB400)).